The primary structure comprises 161 residues: Lipoprotein signal peptidase (161 aa).

Transmembrane regions (helical) follow at residues 8-28 (LKYF…KYLA), 40-60 (ITSF…SLLS), 67-87 (QMIM…YLII), and 91-111 (ITEK…LGNF). Catalysis depends on residues Asp-122 and Asp-140. Residues 136-156 (FNIADSAITCGVVILIAASLF) form a helical membrane-spanning segment.

It belongs to the peptidase A8 family.

It is found in the cell inner membrane. The catalysed reaction is Release of signal peptides from bacterial membrane prolipoproteins. Hydrolyzes -Xaa-Yaa-Zaa-|-(S,diacylglyceryl)Cys-, in which Xaa is hydrophobic (preferably Leu), and Yaa (Ala or Ser) and Zaa (Gly or Ala) have small, neutral side chains.. Its pathway is protein modification; lipoprotein biosynthesis (signal peptide cleavage). In terms of biological role, this protein specifically catalyzes the removal of signal peptides from prolipoproteins. The protein is Lipoprotein signal peptidase of Francisella tularensis subsp. tularensis (strain FSC 198).